Consider the following 186-residue polypeptide: Protein MTH_152 (186 aa).

Belongs to the flavoredoxin family. As to quaternary structure, homodimer. It depends on FMN as a cofactor.

The protein is Protein MTH_152 of Methanothermobacter thermautotrophicus (strain ATCC 29096 / DSM 1053 / JCM 10044 / NBRC 100330 / Delta H) (Methanobacterium thermoautotrophicum).